The chain runs to 551 residues: Formate--tetrahydrofolate ligase (551 aa).

61 to 68 serves as a coordination point for ATP; that stretch reads TPAGEGKS.

This sequence belongs to the formate--tetrahydrofolate ligase family.

It carries out the reaction (6S)-5,6,7,8-tetrahydrofolate + formate + ATP = (6R)-10-formyltetrahydrofolate + ADP + phosphate. It participates in one-carbon metabolism; tetrahydrofolate interconversion. This chain is Formate--tetrahydrofolate ligase, found in Lactiplantibacillus plantarum (strain ATCC BAA-793 / NCIMB 8826 / WCFS1) (Lactobacillus plantarum).